Here is an 83-residue protein sequence, read N- to C-terminus: Cytochrome b559 subunit alpha (83 aa).

A helical transmembrane segment spans residues 21–35 (VIHSITIPSLFIAGW). Residue H23 coordinates heme.

Belongs to the PsbE/PsbF family. In terms of assembly, heterodimer of an alpha subunit and a beta subunit. PSII is composed of 1 copy each of membrane proteins PsbA, PsbB, PsbC, PsbD, PsbE, PsbF, PsbH, PsbI, PsbJ, PsbK, PsbL, PsbM, PsbT, PsbX, PsbY, PsbZ, Psb30/Ycf12, at least 3 peripheral proteins of the oxygen-evolving complex and a large number of cofactors. It forms dimeric complexes. It depends on heme b as a cofactor.

The protein localises to the plastid. It is found in the chloroplast thylakoid membrane. This b-type cytochrome is tightly associated with the reaction center of photosystem II (PSII). PSII is a light-driven water:plastoquinone oxidoreductase that uses light energy to abstract electrons from H(2)O, generating O(2) and a proton gradient subsequently used for ATP formation. It consists of a core antenna complex that captures photons, and an electron transfer chain that converts photonic excitation into a charge separation. The protein is Cytochrome b559 subunit alpha of Agrostis stolonifera (Creeping bentgrass).